The primary structure comprises 309 residues: MYFQDLILKLQTYWASRNCILAQGYDQEVGAGTMNPSTFLRVLGPEPWNVAYVEPSRRPADGRYGENPNRLYQHHQFQVILKPNPPDVQELYLGSLRAIGIDPREHDIRFVEDDWESPTLGAWGLGWEVWCDGMEITQYTYFQQAGGFEVRPVAAELTYGLERIAMYLQDVENVFDVEWVKGVKYREVFHRNEVEMSTYSFQASDPKMLFGLFDTYEAECKRLNGLKLPLPAYDYCLKCSHTFNNLDARGAISVTERAAYIGRVRALAHECARGYLDSREALGFPLLPPADRKQAVEAARAAREARESR.

It belongs to the class-II aminoacyl-tRNA synthetase family. Tetramer of two alpha and two beta subunits.

The protein localises to the cytoplasm. The enzyme catalyses tRNA(Gly) + glycine + ATP = glycyl-tRNA(Gly) + AMP + diphosphate. This Anaeromyxobacter sp. (strain K) protein is Glycine--tRNA ligase alpha subunit.